Here is a 335-residue protein sequence, read N- to C-terminus: tRNA N6-adenosine threonylcarbamoyltransferase (335 aa).

The Fe cation site is built by H111, H115, and Y132. Substrate is bound by residues 132 to 136 (YVSGG), D164, G177, E181, and N260. D288 is a binding site for Fe cation.

This sequence belongs to the KAE1 / TsaD family. In terms of assembly, monomer. Component of the KEOPS complex that consists of Kae1, Bud32, Cgi121 and Pcc1; the whole complex dimerizes. Fe(2+) is required as a cofactor.

The protein resides in the cytoplasm. The catalysed reaction is L-threonylcarbamoyladenylate + adenosine(37) in tRNA = N(6)-L-threonylcarbamoyladenosine(37) in tRNA + AMP + H(+). Functionally, required for the formation of a threonylcarbamoyl group on adenosine at position 37 (t(6)A37) in tRNAs that read codons beginning with adenine. Is a component of the KEOPS complex that is probably involved in the transfer of the threonylcarbamoyl moiety of threonylcarbamoyl-AMP (TC-AMP) to the N6 group of A37. Kae1 likely plays a direct catalytic role in this reaction, but requires other protein(s) of the complex to fulfill this activity. This chain is tRNA N6-adenosine threonylcarbamoyltransferase, found in Methanococcoides burtonii (strain DSM 6242 / NBRC 107633 / OCM 468 / ACE-M).